Consider the following 242-residue polypeptide: MDYQDVEIAYFIERPNRFIAFCLNKKGEVVKTHVKNTGRGKELLLPGAEVALVHIPGTKRKTAYDLIAVKKEQQWFNIDSQLPNRLAIDGILDGTIHLPNLNSDIEFYKREVTFGKSKFDIYLETSCGQKAFVEVKGMTLENKAIGAFPDAPTIRGLKHVNELIGAHQEGYETYILFIAQFEHLHQATIHEQMQPELATAFRFAQQAGVQVIVYNCQVTEKQVVLKQAIPFDLNTVFEDPNL.

The protein belongs to the SfsA family.

The sequence is that of Sugar fermentation stimulation protein homolog from Enterococcus mundtii.